A 128-amino-acid chain; its full sequence is Small ribosomal subunit protein bS6 (128 aa).

Residues 100-128 (SPMAKAKEERFTRRDDERREEATEAASEE) form a disordered region. A compositionally biased stretch (basic and acidic residues) spans 104 to 121 (KAKEERFTRRDDERREEA).

Belongs to the bacterial ribosomal protein bS6 family.

Functionally, binds together with bS18 to 16S ribosomal RNA. This Aeromonas hydrophila subsp. hydrophila (strain ATCC 7966 / DSM 30187 / BCRC 13018 / CCUG 14551 / JCM 1027 / KCTC 2358 / NCIMB 9240 / NCTC 8049) protein is Small ribosomal subunit protein bS6.